The sequence spans 528 residues: Glutamyl-tRNA(Gln) amidotransferase subunit A, mitochondrial (528 aa).

The active-site Charge relay system is the lysine 76. Positions 147 to 166 (QYREKRKQNPHSKNEDSDWL) are disordered. Serine 171 functions as the Charge relay system in the catalytic mechanism. Serine 195 serves as the catalytic Acyl-ester intermediate.

This sequence belongs to the amidase family. GatA subfamily. In terms of assembly, subunit of the heterotrimeric GatCAB amidotransferase (AdT) complex, composed of A (QRSL1), B (GATB) and C (GATC) subunits.

The protein resides in the mitochondrion. It carries out the reaction L-glutamyl-tRNA(Gln) + L-glutamine + ATP + H2O = L-glutaminyl-tRNA(Gln) + L-glutamate + ADP + phosphate + H(+). Allows the formation of correctly charged Gln-tRNA(Gln) through the transamidation of misacylated Glu-tRNA(Gln) in the mitochondria. The reaction takes place in the presence of glutamine and ATP through an activated gamma-phospho-Glu-tRNA(Gln). The protein is Glutamyl-tRNA(Gln) amidotransferase subunit A, mitochondrial of Macaca fascicularis (Crab-eating macaque).